The primary structure comprises 241 residues: Tetraspanin-1 (241 aa).

Residues 1 to 11 lie on the Cytoplasmic side of the membrane; that stretch reads MGCFNFIKVMM. The chain crosses the membrane as a helical span at residues 12-32; sequence ILFNMLIFLCGAALLAVGIWV. Topologically, residues 33–52 are extracellular; it reads SVDGPSFVKIFGPMSSSAMQ. Residues 53-73 form a helical membrane-spanning segment; sequence FVNVGYFLIAAGAVLFALGFL. The Cytoplasmic segment spans residues 74-88; it reads GCYGAQTESKCALMT. A helical membrane pass occupies residues 89–109; the sequence is FFFILLLIFIAEVAAAVVALV. Residues 110–211 lie on the Extracellular side of the membrane; the sequence is YTTLAENFLT…KQLLYDIRTN (102 aa). Asn-141, Asn-154, Asn-167, Asn-180, Asn-189, and Asn-194 each carry an N-linked (GlcNAc...) asparagine glycan. The chain crosses the membrane as a helical span at residues 212-232; it reads AVTVGGVAAGIGGLELAAMIV. Over 233-241 the chain is Cytoplasmic; sequence SMYLYCNLE.

This sequence belongs to the tetraspanin (TM4SF) family. As to quaternary structure, interacts with SLC19A2. Interacts with NTRK1/TRKA.

The protein resides in the lysosome membrane. Structural component of specialized membrane microdomains known as tetraspanin-enriched microdomains (TERMs), which act as platforms for receptor clustering and signaling. Participates thereby in diverse biological functions such as cell signal transduction, adhesion, migration and protein trafficking. Regulates neuronal differentiation in response to NGF by facilitating NGF-mediated activation of NTRK1/TRKA receptor tyrosine kinase and subsequent downstream signaling pathways. Plays a role in the inhibition of TNFalpha-induced apoptosis. Mechanistically, inhibits the NF-kappa-B signaling pathway by blocking phosphorylation of CHUK. Also promotes the stability of the thiamine transporter 1/SLC19A2 in intestinal epithelial cells leading to an increase of thiamine uptake process. This is Tetraspanin-1 (TSPAN1) from Bos taurus (Bovine).